Reading from the N-terminus, the 95-residue chain is Large ribosomal subunit protein bL25 (95 aa).

This sequence belongs to the bacterial ribosomal protein bL25 family. In terms of assembly, part of the 50S ribosomal subunit; part of the 5S rRNA/L5/L18/L25 subcomplex. Contacts the 5S rRNA. Binds to the 5S rRNA independently of L5 and L18.

In terms of biological role, this is one of the proteins that binds to the 5S RNA in the ribosome where it forms part of the central protuberance. This chain is Large ribosomal subunit protein bL25, found in Aeromonas salmonicida (strain A449).